A 121-amino-acid chain; its full sequence is MPRYELALILKAMQRPETAAVLKRTVEALMERGAIVRNLENLGERALPYKISKHNHRHRRGGYFLVDLEGPPSIVSTMMDHLGRDIDIIRRAFIKYPVSKTEECSGIVPVNCEDKLIPKKK.

Belongs to the bacterial ribosomal protein bS6 family. As to quaternary structure, component of the mitochondrial ribosome small subunit (28S) which comprises a 12S rRNA and about 30 distinct proteins.

It localises to the mitochondrion. This Gallus gallus (Chicken) protein is Small ribosomal subunit protein bS6m (MRPS6).